Reading from the N-terminus, the 251-residue chain is Indole-3-glycerol phosphate synthase (251 aa).

Residues 1 to 12 (MDDSSSLASPVQ) are compositionally biased toward polar residues. Positions 1–27 (MDDSSSLASPVQSILAAARRRDPPTRR) are disordered.

It belongs to the TrpC family.

The catalysed reaction is 1-(2-carboxyphenylamino)-1-deoxy-D-ribulose 5-phosphate + H(+) = (1S,2R)-1-C-(indol-3-yl)glycerol 3-phosphate + CO2 + H2O. It functions in the pathway amino-acid biosynthesis; L-tryptophan biosynthesis; L-tryptophan from chorismate: step 4/5. This Halobacterium salinarum (strain ATCC 700922 / JCM 11081 / NRC-1) (Halobacterium halobium) protein is Indole-3-glycerol phosphate synthase.